The primary structure comprises 94 residues: Co-chaperonin GroES (94 aa).

The protein belongs to the GroES chaperonin family. As to quaternary structure, heptamer of 7 subunits arranged in a ring. Interacts with the chaperonin GroEL.

Its subcellular location is the cytoplasm. Together with the chaperonin GroEL, plays an essential role in assisting protein folding. The GroEL-GroES system forms a nano-cage that allows encapsulation of the non-native substrate proteins and provides a physical environment optimized to promote and accelerate protein folding. GroES binds to the apical surface of the GroEL ring, thereby capping the opening of the GroEL channel. The protein is Co-chaperonin GroES of Geobacillus sp. (strain WCH70).